The chain runs to 262 residues: Origin recognition complex subunit 6 (262 aa).

The tract at residues 197–217 (ALKRKKPEFSPTLKKKEPGLE) is disordered. Lysine 221 is covalently cross-linked (Glycyl lysine isopeptide (Lys-Gly) (interchain with G-Cter in SUMO2)). Threonine 239 carries the post-translational modification Phosphothreonine.

Belongs to the ORC6 family. Component of ORC, a complex composed of at least 6 subunits: ORC1, ORC2, ORC3, ORC4, ORC5 and ORC6. ORC is regulated in a cell-cycle dependent manner. It is sequentially assembled at the exit from anaphase of mitosis and disassembled as cells enter S phase. Interacts with DBF4.

The protein localises to the nucleus. Functionally, component of the origin recognition complex (ORC) that binds origins of replication. DNA-binding is ATP-dependent. The specific DNA sequences that define origins of replication have not been identified yet. ORC is required to assemble the pre-replication complex necessary to initiate DNA replication. This chain is Origin recognition complex subunit 6 (Orc6), found in Mus musculus (Mouse).